The chain runs to 312 residues: Ubiquinone biosynthesis O-methyltransferase, mitochondrial (312 aa).

The N-terminal 32 residues, 1 to 32 (MLLRSRFLKVIHVRKQLSACSRFAIQTQTRCK), are a transit peptide targeting the mitochondrion. S-adenosyl-L-methionine-binding residues include R68, G130, D153, and M196. 3 residues coordinate Mg(2+): E197, E200, and H201.

Belongs to the class I-like SAM-binding methyltransferase superfamily. UbiG/COQ3 family. As to quaternary structure, component of a multi-subunit COQ enzyme complex, composed of at least COQ3, COQ4, COQ5, COQ6, COQ7 and COQ9. Interacts directly with COQ4. The cofactor is Mg(2+).

The protein localises to the mitochondrion inner membrane. It catalyses the reaction 3,4-dihydroxy-5-(all-trans-hexaprenyl)benzoate + S-adenosyl-L-methionine = 4-hydroxy-3-methoxy-5-(all-trans-hexaprenyl)benzoate + S-adenosyl-L-homocysteine + H(+). The enzyme catalyses a 3-demethylubiquinone + S-adenosyl-L-methionine = a ubiquinone + S-adenosyl-L-homocysteine. It carries out the reaction 3-demethylubiquinol-6 + S-adenosyl-L-methionine = ubiquinol-6 + S-adenosyl-L-homocysteine + H(+). Its pathway is cofactor biosynthesis; ubiquinone biosynthesis. Regulated in response to catabolite repression. Its function is as follows. O-methyltransferase required for two non-consecutive steps during ubiquinone biosynthesis. Catalyzes the 2 O-methylation of 3,4-dihydroxy-5-(all-trans-hexaprenyl)benzoic acid into 4-hydroxy-3-methoxy-5-(all-trans-hexaprenyl)benzoic acid. Also catalyzes the last step of ubiquinone biosynthesis by mediating methylation of 3-demethylubiquinone into ubiquinone. Also able to mediate the methylation of 3-demethylubiquinol-6 into ubiquinol-6. This is Ubiquinone biosynthesis O-methyltransferase, mitochondrial from Saccharomyces cerevisiae (strain ATCC 204508 / S288c) (Baker's yeast).